A 415-amino-acid chain; its full sequence is Lipoyl synthase, mitochondrial (415 aa).

A mitochondrion-targeting transit peptide spans 1-32 (MAASTNRLRFLYSSARTVPQTGSITPISRRTY). Polar residues predominate over residues 22 to 32 (GSITPISRRTY). Positions 22–53 (GSITPISRRTYATTEPSPSATGAPATARKRTN) are disordered. Positions 33-47 (ATTEPSPSATGAPAT) are enriched in low complexity. 7 residues coordinate [4Fe-4S] cluster: Cys-132, Cys-137, Cys-143, Cys-163, Cys-167, Cys-170, and Ser-378. The 222-residue stretch at 146–367 (GSDKSAATAT…RQRALDMGFL (222 aa)) folds into the Radical SAM core domain. Residues 395-415 (AAGTAGESVTDSKAAVDEATR) are disordered.

It belongs to the radical SAM superfamily. Lipoyl synthase family. [4Fe-4S] cluster serves as cofactor.

It localises to the mitochondrion. The enzyme catalyses [[Fe-S] cluster scaffold protein carrying a second [4Fe-4S](2+) cluster] + N(6)-octanoyl-L-lysyl-[protein] + 2 oxidized [2Fe-2S]-[ferredoxin] + 2 S-adenosyl-L-methionine + 4 H(+) = [[Fe-S] cluster scaffold protein] + N(6)-[(R)-dihydrolipoyl]-L-lysyl-[protein] + 4 Fe(3+) + 2 hydrogen sulfide + 2 5'-deoxyadenosine + 2 L-methionine + 2 reduced [2Fe-2S]-[ferredoxin]. The protein operates within protein modification; protein lipoylation via endogenous pathway; protein N(6)-(lipoyl)lysine from octanoyl-[acyl-carrier-protein]: step 2/2. Its function is as follows. Catalyzes the radical-mediated insertion of two sulfur atoms into the C-6 and C-8 positions of the octanoyl moiety bound to the lipoyl domains of lipoate-dependent enzymes, thereby converting the octanoylated domains into lipoylated derivatives. The chain is Lipoyl synthase, mitochondrial from Aspergillus oryzae (strain ATCC 42149 / RIB 40) (Yellow koji mold).